The following is a 475-amino-acid chain: MAEAATRSVGKVTQVIGAVVDVAFEGELPAILNALETDNNGNRLVLEVAQHLGENEVRTIAMDSSEGLVRGQQVIDTGAPISVPVGDETLGRIMNVIGEPVDEAGPLNTAHKRAIHQDAPAYVEQSTEAQILVTGIKVVDLLAPYAKGGKIGLFGGAGVGKTVLIMELINNVAKAHGGYSVFAGVGERTREGNDLYHEMIESGVNKHGGGEGSKAALVYGQMNEPPGARARVALTGLTVAEHFRDQGQDVLFFVDNIFRFTQAGSEVSALLGRIPSAVGYQPTLATDMGQMQERITTTTTGSITSVQAIYVPADDLTDPAPATSFAHLDATTVLSRSIAEKGIYPAVDPLDSTSRMLDPMVVGEEHYEVARKVQSTLQRYKALQDIIAILGMDELSEEDKLAVARARKIERFLSQPFFVAEVFTGSPGKLVALEDTIKGFKGLVNGEYDNLPEAAFYMVGSMDEAIEKAKKLAAA.

155–162 contacts ATP; it reads GGAGVGKT.

This sequence belongs to the ATPase alpha/beta chains family. F-type ATPases have 2 components, CF(1) - the catalytic core - and CF(0) - the membrane proton channel. CF(1) has five subunits: alpha(3), beta(3), gamma(1), delta(1), epsilon(1). CF(0) has three main subunits: a(1), b(2) and c(9-12). The alpha and beta chains form an alternating ring which encloses part of the gamma chain. CF(1) is attached to CF(0) by a central stalk formed by the gamma and epsilon chains, while a peripheral stalk is formed by the delta and b chains.

It is found in the cell inner membrane. The enzyme catalyses ATP + H2O + 4 H(+)(in) = ADP + phosphate + 5 H(+)(out). In terms of biological role, produces ATP from ADP in the presence of a proton gradient across the membrane. The catalytic sites are hosted primarily by the beta subunits. The polypeptide is ATP synthase subunit beta (Rhizobium etli (strain ATCC 51251 / DSM 11541 / JCM 21823 / NBRC 15573 / CFN 42)).